The chain runs to 309 residues: Ribonuclease Z (309 aa).

Zn(2+) contacts are provided by histidine 63, histidine 65, aspartate 67, histidine 68, histidine 145, aspartate 216, and histidine 274. Aspartate 67 serves as the catalytic Proton acceptor.

It belongs to the RNase Z family. Homodimer. The cofactor is Zn(2+).

The enzyme catalyses Endonucleolytic cleavage of RNA, removing extra 3' nucleotides from tRNA precursor, generating 3' termini of tRNAs. A 3'-hydroxy group is left at the tRNA terminus and a 5'-phosphoryl group is left at the trailer molecule.. In terms of biological role, zinc phosphodiesterase, which displays some tRNA 3'-processing endonuclease activity. Probably involved in tRNA maturation, by removing a 3'-trailer from precursor tRNA. The polypeptide is Ribonuclease Z (Streptococcus gordonii (strain Challis / ATCC 35105 / BCRC 15272 / CH1 / DL1 / V288)).